Here is a 255-residue protein sequence, read N- to C-terminus: Putative oxidoreductase YtkK (255 aa).

Position 7-14 (7-14 (TAGSKGLG)) interacts with NAD(+).

The protein belongs to the short-chain dehydrogenases/reductases (SDR) family.

The protein is Putative oxidoreductase YtkK (ytkK) of Bacillus subtilis (strain 168).